A 402-amino-acid polypeptide reads, in one-letter code: UDP-glucose 6-dehydrogenase (402 aa).

NAD(+)-binding positions include 2–19 (KIAV…GVLL), valine 11, aspartate 29, lysine 34, threonine 83, threonine 118, and glutamate 145. Substrate-binding positions include 141–145 (EFLRE), lysine 204, asparagine 208, 249–253 (YNNPS), and glycine 257. Tyrosine 259 is a binding site for NAD(+). Cysteine 260 functions as the Nucleophile in the catalytic mechanism. Lysine 263 contacts NAD(+). Position 320 (lysine 320) interacts with substrate. Arginine 327 provides a ligand contact to NAD(+).

It belongs to the UDP-glucose/GDP-mannose dehydrogenase family.

The enzyme catalyses UDP-alpha-D-glucose + 2 NAD(+) + H2O = UDP-alpha-D-glucuronate + 2 NADH + 3 H(+). Its pathway is nucleotide-sugar biosynthesis; UDP-alpha-D-glucuronate biosynthesis; UDP-alpha-D-glucuronate from UDP-alpha-D-glucose: step 1/1. Catalyzes the formation of UDP-glucuronic acid which is required for capsular hyaluronic acid synthesis. The chain is UDP-glucose 6-dehydrogenase (hasB) from Streptococcus pyogenes serotype M18 (strain MGAS8232).